The sequence spans 72 residues: VLIIAVLFLTASELVTADYTRDKWQYRAASLRDAMRNFRDTRTCSPAGEVCTSKSPCCTGFLCSHIGGMCHH.

The first 17 residues, 1–17, serve as a signal peptide directing secretion; sequence VLIIAVLFLTASELVTA. Positions 18 to 41 are excised as a propeptide; that stretch reads DYTRDKWQYRAASLRDAMRNFRDT. 3 disulfides stabilise this stretch: cysteine 44–cysteine 58, cysteine 51–cysteine 63, and cysteine 57–cysteine 70.

It belongs to the conotoxin O1 superfamily. As to expression, expressed by the venom duct.

It is found in the secreted. The polypeptide is Conotoxin LvVIA (Conus lividus (Livid cone)).